The primary structure comprises 93 residues: Large ribosomal subunit protein bL27 (93 aa).

Residues 1–9 constitute a propeptide that is removed on maturation; it reads MLQLNLQFF. The segment at 14–33 is disordered; it reads GVGSTKNGRDSISKRLGAKR.

Belongs to the bacterial ribosomal protein bL27 family. In terms of processing, the N-terminus is cleaved by ribosomal processing cysteine protease Prp.

In Exiguobacterium sp. (strain ATCC BAA-1283 / AT1b), this protein is Large ribosomal subunit protein bL27.